Here is a 101-residue protein sequence, read N- to C-terminus: Large ribosomal subunit protein eL36 (101 aa).

2 disordered regions span residues 1 to 31 (MGEI…GFLS) and 75 to 101 (GTHM…SKGE).

Belongs to the eukaryotic ribosomal protein eL36 family.

The polypeptide is Large ribosomal subunit protein eL36 (RL36) (Ulva compressa (Green alga)).